Here is a 283-residue protein sequence, read N- to C-terminus: Formamidopyrimidine-DNA glycosylase (283 aa).

P2 functions as the Schiff-base intermediate with DNA in the catalytic mechanism. E3 acts as the Proton donor in catalysis. The active-site Proton donor; for beta-elimination activity is K58. Positions 100, 119, and 162 each coordinate DNA. The segment at 247–283 (DVYGREGAPCKGEGCTGQIKRIVQSGRSSFYCAQCQR) adopts an FPG-type zinc-finger fold. Catalysis depends on R273, which acts as the Proton donor; for delta-elimination activity.

It belongs to the FPG family. Monomer. It depends on Zn(2+) as a cofactor.

It catalyses the reaction Hydrolysis of DNA containing ring-opened 7-methylguanine residues, releasing 2,6-diamino-4-hydroxy-5-(N-methyl)formamidopyrimidine.. The enzyme catalyses 2'-deoxyribonucleotide-(2'-deoxyribose 5'-phosphate)-2'-deoxyribonucleotide-DNA = a 3'-end 2'-deoxyribonucleotide-(2,3-dehydro-2,3-deoxyribose 5'-phosphate)-DNA + a 5'-end 5'-phospho-2'-deoxyribonucleoside-DNA + H(+). In terms of biological role, involved in base excision repair of DNA damaged by oxidation or by mutagenic agents. Acts as a DNA glycosylase that recognizes and removes damaged bases. Has a preference for oxidized purines, such as 7,8-dihydro-8-oxoguanine (8-oxoG). Has AP (apurinic/apyrimidinic) lyase activity and introduces nicks in the DNA strand. Cleaves the DNA backbone by beta-delta elimination to generate a single-strand break at the site of the removed base with both 3'- and 5'-phosphates. This is Formamidopyrimidine-DNA glycosylase from Roseobacter denitrificans (strain ATCC 33942 / OCh 114) (Erythrobacter sp. (strain OCh 114)).